The primary structure comprises 484 residues: Cobyric acid synthase (484 aa).

The region spanning 251-438 is the GATase cobBQ-type domain; the sequence is ALKIAVPMLP…LHGLFGSDAY (188 aa). The active-site Nucleophile is Cys-333. The active site involves His-430.

It belongs to the CobB/CobQ family. CobQ subfamily.

It functions in the pathway cofactor biosynthesis; adenosylcobalamin biosynthesis. In terms of biological role, catalyzes amidations at positions B, D, E, and G on adenosylcobyrinic A,C-diamide. NH(2) groups are provided by glutamine, and one molecule of ATP is hydrogenolyzed for each amidation. The polypeptide is Cobyric acid synthase (Rhizobium etli (strain ATCC 51251 / DSM 11541 / JCM 21823 / NBRC 15573 / CFN 42)).